Here is a 334-residue protein sequence, read N- to C-terminus: Protein SCO1 homolog 1, mitochondrial (334 aa).

The transit peptide at 1–13 (MASALCRTASRLR) directs the protein to the mitochondrion. Residues 74–120 (SASDTTSKHDSGKPETKSSEKNEKSGGSESSDGGSDHKNERASGKDV) are disordered. Basic and acidic residues-rich tracts occupy residues 79 to 99 (TSKH…EKSG) and 107 to 120 (GSDH…GKDV). The helical transmembrane segment at 125-144 (VSWMSFFLLFATGAGLVYYY) threads the bilayer. A Thioredoxin domain is found at 166 to 331 (PSAGKAAIGG…TDGVVKEIRQ (166 aa)). The Cu cation site is built by Cys-206, Cys-210, and His-295.

This sequence belongs to the SCO1/2 family. As to expression, expressed in the whole plant with highest expression in imbibed seeds, embryos, endosperm, and root tips.

Its subcellular location is the mitochondrion inner membrane. Functionally, thought to play a role in cellular copper homeostasis, mitochondrial redox signaling or insertion of copper into the active site of COX. Plays an essential role in embryo development. This is Protein SCO1 homolog 1, mitochondrial (HCC1) from Arabidopsis thaliana (Mouse-ear cress).